The sequence spans 427 residues: Kynureninase (427 aa).

Residues Thr104, Thr105, 132-135, Asp213, His216, and Tyr238 each bind pyridoxal 5'-phosphate; that span reads FPSD. N6-(pyridoxal phosphate)lysine is present on Lys239. Pyridoxal 5'-phosphate is bound by residues Trp267 and Thr295.

This sequence belongs to the kynureninase family. As to quaternary structure, homodimer. Pyridoxal 5'-phosphate serves as cofactor.

It carries out the reaction L-kynurenine + H2O = anthranilate + L-alanine + H(+). It catalyses the reaction 3-hydroxy-L-kynurenine + H2O = 3-hydroxyanthranilate + L-alanine + H(+). It participates in amino-acid degradation; L-kynurenine degradation; L-alanine and anthranilate from L-kynurenine: step 1/1. It functions in the pathway cofactor biosynthesis; NAD(+) biosynthesis; quinolinate from L-kynurenine: step 2/3. Catalyzes the cleavage of L-kynurenine (L-Kyn) and L-3-hydroxykynurenine (L-3OHKyn) into anthranilic acid (AA) and 3-hydroxyanthranilic acid (3-OHAA), respectively. The sequence is that of Kynureninase from Shouchella clausii (strain KSM-K16) (Alkalihalobacillus clausii).